The chain runs to 120 residues: DNA-binding protein HQ_1105A (120 aa).

Residues 1–55 form a disordered region; the sequence is MSETPDDLDELRQQRMEELRDQADGQQSQTSDNTAAAQEAAREKAEAQQEALLKQ. Residues 10–23 show a composition bias toward basic and acidic residues; the sequence is ELRQQRMEELRDQA. Over residues 24 to 34 the composition is skewed to polar residues; that stretch reads DGQQSQTSDNT.

This sequence belongs to the PDCD5 family.

This is DNA-binding protein HQ_1105A from Haloquadratum walsbyi (strain DSM 16790 / HBSQ001).